Reading from the N-terminus, the 354-residue chain is Rhodopsin (354 aa).

The Extracellular portion of the chain corresponds to 1 to 36 (MNGTEGPMFYVPMSNATGVVKSPYDYPQYYLVAPWA). Residues Asn2 and Asn15 are each glycosylated (N-linked (GlcNAc...) asparagine). A helical transmembrane segment spans residues 37–61 (YGCLAAYMFFLIITGFPINFLTLYV). Residues 62–73 (TIEHKKLRTPLN) lie on the Cytoplasmic side of the membrane. A helical membrane pass occupies residues 74 to 96 (YILLNLAISDLFMVFGGFTTTMY). Residues 97–110 (TSLHGYFVFGRIGC) lie on the Extracellular side of the membrane. The cysteines at positions 110 and 187 are disulfide-linked. A helical transmembrane segment spans residues 111–133 (NLEGFFATLGGEMGLWSLVVLAF). Residues 134-136 (ERW) carry the 'Ionic lock' involved in activated form stabilization motif. Over 134–152 (ERWMVVCKPVSNFRFGENH) the chain is Cytoplasmic. A helical membrane pass occupies residues 153–173 (AIMGVVFTWFMACTCAVPPLV). At 174 to 202 (GWSRYIPEGMQCSCGVDYYTRAPGYNNES) the chain is on the extracellular side. A helical transmembrane segment spans residues 203 to 224 (FVIYMFLVHFIIPLIVIFFCYG). Residues 225-252 (RLVCTVKDAAAQQQESETTQRAEREVTR) are Cytoplasmic-facing. The chain crosses the membrane as a helical span at residues 253-274 (MVVIMVIGFLICWIPYASVAWY). Topologically, residues 275–286 (IFTHQGSEFGPV) are extracellular. The helical transmembrane segment at 287-308 (FMTVPAFFAKSAAVYNPCIYIC) threads the bilayer. The residue at position 296 (Lys296) is an N6-(retinylidene)lysine. Residues 309 to 354 (MNKQFRHCMITTLCCGKNPFEEEEGASTTASKTEASSVSSSSVSPA) lie on the Cytoplasmic side of the membrane. S-palmitoyl cysteine attachment occurs at residues Cys322 and Cys323. Positions 333–354 (GASTTASKTEASSVSSSSVSPA) are disordered. Residues 334-354 (ASTTASKTEASSVSSSSVSPA) are compositionally biased toward low complexity.

The protein belongs to the G-protein coupled receptor 1 family. Opsin subfamily. Phosphorylated on some or all of the serine and threonine residues present in the C-terminal region. Post-translationally, contains one covalently linked retinal chromophore.

It is found in the membrane. The protein localises to the cell projection. The protein resides in the cilium. Its subcellular location is the photoreceptor outer segment. Photoreceptor required for image-forming vision at low light intensity. While most salt water fish species use retinal as chromophore, most freshwater fish use 3-dehydroretinal, or a mixture of retinal and 3-dehydroretinal. Light-induced isomerization of 11-cis to all-trans retinal triggers a conformational change that activates signaling via G-proteins. Subsequent receptor phosphorylation mediates displacement of the bound G-protein alpha subunit by arrestin and terminates signaling. The chain is Rhodopsin (rho) from Cyprinus carpio (Common carp).